The primary structure comprises 334 residues: Anthranilate phosphoribosyltransferase (334 aa).

Residues Gly-79, 82–83 (GD), Ser-87, 89–92 (NIST), 107–115 (KHGNRSISS), and Ser-119 each bind 5-phospho-alpha-D-ribose 1-diphosphate. Gly-79 provides a ligand contact to anthranilate. Ser-91 is a binding site for Mg(2+). Asn-110 contacts anthranilate. Arg-165 contacts anthranilate. Mg(2+) is bound by residues Asp-224 and Glu-225.

Belongs to the anthranilate phosphoribosyltransferase family. Homodimer. Mg(2+) serves as cofactor.

It carries out the reaction N-(5-phospho-beta-D-ribosyl)anthranilate + diphosphate = 5-phospho-alpha-D-ribose 1-diphosphate + anthranilate. The protein operates within amino-acid biosynthesis; L-tryptophan biosynthesis; L-tryptophan from chorismate: step 2/5. Functionally, catalyzes the transfer of the phosphoribosyl group of 5-phosphorylribose-1-pyrophosphate (PRPP) to anthranilate to yield N-(5'-phosphoribosyl)-anthranilate (PRA). The sequence is that of Anthranilate phosphoribosyltransferase from Streptococcus pneumoniae serotype 19F (strain G54).